A 191-amino-acid polypeptide reads, in one-letter code: uncharacterized protein (191 aa).

Helical transmembrane passes span 24–44 (IVRGLIDGSLSALGVVIGASG), 51–71 (IIAAGLGGGIANGLSNILGAF), 114–134 (LIDGISTTIGSALPVVPFFLF), 139–159 (ALYVAIGITIAILFILGVFIG), and 167–187 (IISGIKMVAGALAVAILCFMI).

Its subcellular location is the cell membrane. This is an uncharacterized protein from Methanocaldococcus jannaschii (strain ATCC 43067 / DSM 2661 / JAL-1 / JCM 10045 / NBRC 100440) (Methanococcus jannaschii).